Reading from the N-terminus, the 373-residue chain is MLKLIEDAIERTSAAPQASAPEVRTQSDIDEELKKLLEQIQAKIYVVGVGGAGCNTINRMMQVGIQGAKIIAMNTDAQDLLKVRAHKKILLGKELTRGLGAGNNPKIGEEAAKESEREIREALEGADMVFITCGLGGGTGTGAAPVVAEIAKKMGALTVAVVTLPFTVEGIRRIKNAEYGLERLKKNTDTVIVIPNDKLMEVAPNLPIHMAFKVADEILVQAVKGITELITKPGLVNLDFNDVRAVMKDGGVAMIGIGESDSEKRALEAAQQALNSPLLDVDISGAKGALISISGSDVKLEEAQQIIELVTSKLDPEAQVIWGIQLDEELGKMIRILLVVTGVSSPYSVAEEEEESYFGEEERRPIKLDLDEL.

Residues 51–55, 138–140, Glu-169, Arg-173, and Asp-216 contribute to the GTP site; these read GAGCN and GTG. The disordered stretch occupies residues 354 to 373; sequence EESYFGEEERRPIKLDLDEL. Basic and acidic residues predominate over residues 360–373; sequence EEERRPIKLDLDEL.

The protein belongs to the FtsZ family. In terms of assembly, homodimer. Polymerizes to form a dynamic ring structure in a strictly GTP-dependent manner. Interacts directly with several other division proteins.

The protein localises to the cytoplasm. Its function is as follows. Essential cell division protein that forms a contractile ring structure (Z ring) at the future cell division site. The regulation of the ring assembly controls the timing and the location of cell division. One of the functions of the FtsZ ring is to recruit other cell division proteins to the septum to produce a new cell wall between the dividing cells. Binds GTP and shows GTPase activity. The polypeptide is Cell division protein FtsZ 1 (Thermococcus kodakarensis (strain ATCC BAA-918 / JCM 12380 / KOD1) (Pyrococcus kodakaraensis (strain KOD1))).